We begin with the raw amino-acid sequence, 74 residues long: MKLSCLLLTLAIIVVLTIVHAPNVEAKALADPESDAVGFADAVGEADPNAIIGLVSKGTCVLVKTVCKKVLKQG.

The signal sequence occupies residues 1–26; sequence MKLSCLLLTLAIIVVLTIVHAPNVEA. A propeptide spanning residues 27 to 50 is cleaved from the precursor; the sequence is KALADPESDAVGFADAVGEADPNA. Glutamine 73 bears the Glutamine amide mark.

It belongs to the formicidae venom precursor-01 superfamily. Ant pilosulin family. In terms of tissue distribution, expressed by the venom gland.

It is found in the secreted. Its function is as follows. Shows moderate activity against E.coli and S.aureus (MIC&lt;25 uM), slight activity against B.subtilis (MIC&lt;50 uM), and no activity against L.garvieae, P.aeruginosa, C.albicans, and S.cerevisiae. Has no hemolytic nor cytolytic activity. Causes an IgE-independent histamine release. This Myrmecia banksi (Jack jumper ant) protein is M-myrmeciitoxin-Mb1a.